The sequence spans 428 residues: Glial fibrillary acidic protein (428 aa).

A head region spans residues 1–68; the sequence is MERRRVTSAT…KETRASERAE (68 aa). Thr-7 bears the Phosphothreonine; by AURKB and ROCK1 mark. An Omega-N-methylarginine modification is found at Arg-12. Position 13 is a phosphoserine; by AURKB and ROCK1 (Ser-13). Residues Arg-26 and Arg-32 each carry the citrulline modification. The residue at position 34 (Ser-34) is a Phosphoserine; by AURKB and ROCK1. Residues 65-373 enclose the IF rod domain; that stretch reads ERAEMMELND…KLLEGEENRI (309 aa). The coil 1A stretch occupies residues 69-100; that stretch reads MMELNDRFASYIEKVRFLEQQNKALAAELNQL. A Phosphoserine modification is found at Ser-78. The segment at 101-111 is linker 1; the sequence is RAKEPTKLADV. Phosphothreonine is present on residues Thr-106 and Thr-146. The segment at 112–210 is coil 1B; that stretch reads YQAELRELRL…EEEVRELQEQ (99 aa). Positions 211–226 are linker 12; that stretch reads LAQQQVHVEMDVAKPD. The interval 227–248 is coil 2A; that stretch reads LTAALREIRTQYEAVASSNMHE. Positions 249–252 are linker 2; the sequence is AEEW. Positions 253–373 are coil 2B; sequence YRSKFADLND…KLLEGEENRI (121 aa). Arg-266 is subject to Citrulline. Phosphoserine is present on Ser-319. Residues 374–428 are tail; the sequence is TIPVQTFSNLQIRETSLDTKSVSEGHLKRNIVVKTVEMRDGEVIKESKQEHKDVM. Thr-379 is modified (phosphothreonine). Ser-381 bears the Phosphoserine mark. 2 positions are modified to citrulline: Arg-402 and Arg-412.

Belongs to the intermediate filament family. As to quaternary structure, interacts with SYNM. In terms of processing, phosphorylated by PKN1.

It is found in the cytoplasm. Functionally, GFAP, a class-III intermediate filament, is a cell-specific marker that, during the development of the central nervous system, distinguishes astrocytes from other glial cells. The chain is Glial fibrillary acidic protein (GFAP) from Bos taurus (Bovine).